Here is a 133-residue protein sequence, read N- to C-terminus: MARKKEFRYRGYTFEELLNMSLEDFAKLLPARQRRSLKRGLSPEQKKLLRKIRLAKKGKYNKPIRTHSRDMVILPEMVGMTIHVYNGKEFVPVEIKEEMIGHYLGEFALTRKIVQHGSPGVGATRSSMFVAIK.

Belongs to the universal ribosomal protein uS19 family.

In terms of biological role, protein S19 forms a complex with S13 that binds strongly to the 16S ribosomal RNA. The sequence is that of Small ribosomal subunit protein uS19 from Thermococcus onnurineus (strain NA1).